We begin with the raw amino-acid sequence, 188 residues long: Phosphatidylinositol N-acetylglucosaminyltransferase subunit H (188 aa).

It belongs to the PIGH family. Component of the glycosylphosphatidylinositol-N-acetylglucosaminyltransferase (GPI-GnT) complex composed at least by PIGA, PIGC, PIGH, PIGP, PIGQ, PIGY and DPM2. Interacts with PIGQ.

The protein localises to the cytoplasm. It participates in glycolipid biosynthesis; glycosylphosphatidylinositol-anchor biosynthesis. Functionally, part of the glycosylphosphatidylinositol-N-acetylglucosaminyltransferase (GPI-GnT) complex that catalyzes the transfer of N-acetylglucosamine from UDP-N-acetylglucosamine to phosphatidylinositol and participates in the first step of GPI biosynthesis. The protein is Phosphatidylinositol N-acetylglucosaminyltransferase subunit H of Bos taurus (Bovine).